The following is a 737-amino-acid chain: Zinc finger protein 184 (737 aa).

Residues 28-99 (VTFKDVVVNF…DSCIPVGPLE (72 aa)) form the KRAB domain. Ser117 carries the phosphoserine modification. Lys185 is covalently cross-linked (Glycyl lysine isopeptide (Lys-Gly) (interchain with G-Cter in SUMO2)). 17 C2H2-type zinc fingers span residues 201 to 223 (CKCN…QRTH), 229 to 251 (YKCN…QRIH), 257 to 279 (YKCD…QRIH), 285 to 307 (YKCD…QRIH), 313 to 335 (YTCT…QKIH), 341 to 363 (FKCE…QKIH), 369 to 391 (YKCN…HMIH), 397 to 419 (YECN…QKTH), 425 to 447 (YDCA…LKIH), 453 to 475 (YKCS…RRIH), 481 to 503 (FECS…QKTH), 509 to 531 (YECK…ERIH), 537 to 559 (YQCH…KKIH), 565 to 587 (YKCN…KRIH), 593 to 615 (YACP…QKTH), 621 to 643 (YQCN…QRIH), and 649 to 671 (YKCS…RSTH). The C2H2-type 18; degenerate zinc-finger motif lies at 677 to 698 (YNSECPQTFSQSTYLTQHQKIH). The segment at 704-726 (LGCEDCEKAFQCHSALTKHQRLH) adopts a C2H2-type 19 zinc-finger fold.

This sequence belongs to the krueppel C2H2-type zinc-finger protein family.

The protein localises to the nucleus. Functionally, may be involved in transcriptional regulation. This Mus musculus (Mouse) protein is Zinc finger protein 184 (Zfp184).